The primary structure comprises 827 residues: Ribosome biogenesis protein ERB1 (827 aa).

The disordered stretch occupies residues 1–129 (MVHSKKDKSV…DFSDDNDTRP (129 aa)). Over residues 7–18 (DKSVMKHSDIKK) the composition is skewed to basic and acidic residues. The span at 45-60 (CDSDDDEEFQSAEEEV) shows a compositional bias: acidic residues. Residues 61-77 (LSSGSESSSKEGSTPGS) are compositionally biased toward low complexity. Composition is skewed to acidic residues over residues 81–99 (GSDE…DEDA) and 108–124 (EEGD…FSDD). Positions 291–409 (RFVPSKHEAK…LRKVPGYGES (119 aa)) are required for interaction with NOP7. The required for interaction with YTM1 stretch occupies residues 409 to 445 (SVRERFERSLDLYLAPRVRKNKLNIDPESLIPELPSP). WD repeat units lie at residues 461 to 500 (GHKG…EVYK), 509 to 549 (NQDD…FEVE), 657 to 695 (KSKG…LVKK), 698 to 737 (PGAR…TPYK), 741 to 780 (YHEK…DMMK), and 796 to 827 (VNSL…LWTT).

This sequence belongs to the WD repeat BOP1/ERB1 family. As to quaternary structure, component of the NOP7 complex, composed of ERB1, NOP7 and YTM1. The complex is held together by ERB1, which interacts with NOP7 via its N-terminal domain and with YTM1 via a high-affinity interaction between the seven-bladed beta-propeller domains of the 2 proteins. The NOP7 complex associates with the 66S pre-ribosome.

Its subcellular location is the nucleus. It is found in the nucleolus. It localises to the nucleoplasm. Functionally, component of the NOP7 complex, which is required for maturation of the 25S and 5.8S ribosomal RNAs and formation of the 60S ribosome. The sequence is that of Ribosome biogenesis protein ERB1 from Eremothecium gossypii (strain ATCC 10895 / CBS 109.51 / FGSC 9923 / NRRL Y-1056) (Yeast).